The primary structure comprises 197 residues: Dephospho-CoA kinase (197 aa).

The region spanning 3–197 (ILGLTGSIAM…TGCLVGQGSR (195 aa)) is the DPCK domain. Residue 11 to 16 (AMGKST) participates in ATP binding.

It belongs to the CoaE family.

The protein localises to the cytoplasm. It carries out the reaction 3'-dephospho-CoA + ATP = ADP + CoA + H(+). It functions in the pathway cofactor biosynthesis; coenzyme A biosynthesis; CoA from (R)-pantothenate: step 5/5. Functionally, catalyzes the phosphorylation of the 3'-hydroxyl group of dephosphocoenzyme A to form coenzyme A. The polypeptide is Dephospho-CoA kinase (Zymomonas mobilis subsp. mobilis (strain ATCC 31821 / ZM4 / CP4)).